Consider the following 694-residue polypeptide: Follicle-stimulating hormone receptor (694 aa).

Positions Met-1 to Gly-17 are cleaved as a signal peptide. Intrachain disulfides connect Cys-18/Cys-25 and Cys-23/Cys-32. Positions Cys-18–Arg-46 constitute an LRRNT domain. Residues Cys-18 to Arg-365 are Extracellular-facing. 9 LRR repeats span residues Leu-49–Leu-72, Glu-73–Leu-97, His-98–Asn-118, Leu-119–Ser-143, Leu-144–Ser-169, Phe-170–Gly-192, Thr-193–Gly-216, Ala-217–Asn-240, and Leu-241–Glu-259. N-linked (GlcNAc...) asparagine glycosylation is found at Asn-191 and Asn-199. N-linked (GlcNAc...) asparagine glycosylation occurs at Asn-268. Cystine bridges form between Cys-275–Cys-345, Cys-276–Cys-292, Cys-276–Cys-355, and Cys-292–Cys-337. Asn-293 carries an N-linked (GlcNAc...) asparagine glycan. Position 334 is a sulfotyrosine (Tyr-334). The helical transmembrane segment at Val-366–Leu-386 threads the bilayer. The Cytoplasmic portion of the chain corresponds to Ile-387–Arg-397. The chain crosses the membrane as a helical span at residues Phe-398–Val-420. Over Asp-421 to Asp-442 the chain is Extracellular. Cys-441 and Cys-516 are joined by a disulfide. A helical transmembrane segment spans residues Ala-443 to Leu-464. Over Glu-465–His-484 the chain is Cytoplasmic. Residues Ala-485–Ile-507 form a helical membrane-spanning segment. The Extracellular segment spans residues Ser-508–Gln-527. The chain crosses the membrane as a helical span at residues Leu-528–Ile-549. At His-550–Arg-572 the chain is on the cytoplasmic side. A helical membrane pass occupies residues Met-573–Leu-596. Topologically, residues Lys-597–Lys-607 are extracellular. A helical transmembrane segment spans residues Ile-608–Thr-629. Residues Lys-630–Asn-694 lie on the Cytoplasmic side of the membrane.

This sequence belongs to the G-protein coupled receptor 1 family. FSH/LSH/TSH subfamily. In terms of assembly, homotrimer. Functions as a homotrimer binding the FSH hormone heterodimer composed of CGA and FSHB. Interacts with ARRB2. Interacts with APPL2; interaction is independent of follicle stimulating hormone stimulation. Post-translationally, N-glycosylated; indirectly required for FSH-binding, possibly via a conformational change that allows high affinity binding of hormone. In terms of processing, sulfated.

The protein localises to the cell membrane. Its function is as follows. G protein-coupled receptor for follitropin, the follicle-stimulating hormone. Through cAMP production activates the downstream PI3K-AKT and ERK1/ERK2 signaling pathways. This chain is Follicle-stimulating hormone receptor (FSHR), found in Equus caballus (Horse).